The sequence spans 1531 residues: Nuclear factor of activated T-cells 5 (1531 aa).

Disordered regions lie at residues 34 to 89 and 114 to 141; these read ELQL…TSSS and VSNR…RHTV. Positions 41–51 are enriched in polar residues; the sequence is RETSVASMSQT. Positions 63–89 are enriched in low complexity; sequence VVAADASSAPSSSSMGGACSSFTTSSS. A Phosphoserine modification is found at Ser120. Lys122 is subject to N6-acetyllysine. A compositionally biased stretch (polar residues) spans 122 to 134; the sequence is KQLTSNTVQQHPS. Ser134 carries the phosphoserine modification. At Thr135 the chain carries Phosphothreonine; by CDK5. Ser155 carries the post-translational modification Phosphoserine. 2 disordered regions span residues 175 to 220 and 241 to 265; these read WMED…CEES and TTDN…GVKK. Low complexity predominate over residues 179 to 192; sequence SPSNFSNMSTSSYN. Residues 200 to 212 are compositionally biased toward basic residues; it reads KSRKRNPKQRPGV. Residues 241 to 260 show a composition bias toward polar residues; the sequence is TTDNKGNSKAGNGTLENQKG. The RHD domain occupies 264 to 443; sequence KKSPMLCGQY…SPILCTQPAG (180 aa). A DNA-binding region spans residues 293-300; the sequence is RARYLTEG. Lys556 is covalently cross-linked (Glycyl lysine isopeptide (Lys-Gly) (interchain with G-Cter in SUMO1); alternate). A Glycyl lysine isopeptide (Lys-Gly) (interchain with G-Cter in SUMO2); alternate cross-link involves residue Lys556. Ser561 is modified (phosphoserine). Glycyl lysine isopeptide (Lys-Gly) (interchain with G-Cter in SUMO2) cross-links involve residues Lys573 and Lys603. Disordered regions lie at residues 640–666, 841–891, 958–996, 1211–1304, 1316–1371, and 1473–1502; these read NIAG…QQIQ, VSPG…QVME, PPAV…TGTQ, PQVA…QEQQ, APMN…QEQQ, and ISQP…SPLA. The segment covering 646 to 656 has biased composition (low complexity); that stretch reads SFSSPSSSHLP. Polar residues-rich tracts occupy residues 841–852 and 869–878; these read VSPGMFSSTEPT and HPQSENTLSN. Composition is skewed to low complexity over residues 879 to 888 and 960 to 980; these read QQQQQQQQQQ and AVSG…PGTT. Polar residues-rich tracts occupy residues 981-996 and 1224-1247; these read MFQT…TGTQ and PQSQ…NSPS. Residues 1248–1266 show a composition bias toward low complexity; that stretch reads QEQQQQQQQQQQQQQQQQQ. Polar residues-rich tracts occupy residues 1267–1278 and 1291–1304; these read SILFSNQNTMAT and FNPN…QEQQ. The segment covering 1320-1330 has biased composition (low complexity); sequence QEQQPMQFQSQ. The span at 1331 to 1371 shows a compositional bias: polar residues; the sequence is STVSSLQNPGPTQSESSQTPLFHSSPQIQLVQGSPSSQEQQ. Residues 1475–1486 show a composition bias toward low complexity; sequence QPGQPQNEGQPP. Positions 1487 to 1502 are enriched in polar residues; it reads VTTLLSQQMPENSPLA.

As to quaternary structure, homodimer when bound to DNA, completely encircles its DNA target. Interacts with CIDEC; this interaction is direct and retains NFAT5 in the cytoplasm. Does not bind with Fos and Jun transcription factors. Interacts with DDX5 and DDX17; this interaction leads to DDX5/DDX17 recruitment to LNC2 and S100A4 promoters and NFAT5-mediated DDX5/DDX17-enhanced transactivation. Post-translationally, phosphorylated. Phosphorylated at Thr-135 by CDK5 in response to osmotic stress; this phosphorylation mediates its rapid nuclear localization. Poly-ADP-ribosylated by PARP1 in response to DNA damage, promoting recruitment to sites of R-loop-associated DNA damage. Widely expressed, with highest levels in skeletal muscle, brain, heart and peripheral blood leukocytes.

It is found in the nucleus. The protein localises to the cytoplasm. It localises to the chromosome. In terms of biological role, transcription factor involved, among others, in the transcriptional regulation of osmoprotective and inflammatory genes. Binds the DNA consensus sequence 5'-[ACT][AG]TGGAAA[CAT]A[TA][ATC][CA][ATG][GT][GAC][CG][CT]-3'. Mediates the transcriptional response to hypertonicity. Positively regulates the transcription of LCN2 and S100A4 genes; optimal transactivation of these genes requires the presence of DDX5/DDX17. Also involved in the DNA damage response by preventing formation of R-loops; R-loops are composed of a DNA:RNA hybrid and the associated non-template single-stranded DNA. The sequence is that of Nuclear factor of activated T-cells 5 from Homo sapiens (Human).